The following is a 92-amino-acid chain: Small ribosomal subunit protein uS19 (92 aa).

This sequence belongs to the universal ribosomal protein uS19 family.

In terms of biological role, protein S19 forms a complex with S13 that binds strongly to the 16S ribosomal RNA. The protein is Small ribosomal subunit protein uS19 of Corynebacterium urealyticum (strain ATCC 43042 / DSM 7109).